A 213-amino-acid polypeptide reads, in one-letter code: Cytochrome c biogenesis ATP-binding export protein CcmA (213 aa).

Residues 3–211 (LTAENLGVRR…QMTGFAGVET (209 aa)) enclose the ABC transporter domain. Residue 35–42 (GRNGSGKS) coordinates ATP.

It belongs to the ABC transporter superfamily. CcmA exporter (TC 3.A.1.107) family. The complex is composed of two ATP-binding proteins (CcmA) and two transmembrane proteins (CcmB).

It localises to the cell inner membrane. It carries out the reaction heme b(in) + ATP + H2O = heme b(out) + ADP + phosphate + H(+). In terms of biological role, part of the ABC transporter complex CcmAB involved in the biogenesis of c-type cytochromes; once thought to export heme, this seems not to be the case, but its exact role is uncertain. Responsible for energy coupling to the transport system. The sequence is that of Cytochrome c biogenesis ATP-binding export protein CcmA from Agrobacterium fabrum (strain C58 / ATCC 33970) (Agrobacterium tumefaciens (strain C58)).